A 325-amino-acid chain; its full sequence is Olfactory receptor 5H6 (325 aa).

Topologically, residues 1 to 41 are extracellular; the sequence is MFLYLCFIFQRTCSEEMEEENATLLTEFVLTGFLHQPDCKI. N-linked (GlcNAc...) asparagine glycosylation occurs at N21. The helical transmembrane segment at 42-62 threads the bilayer; sequence PLFLAFLVIYLITIMGNLGLI. Residues 63-70 lie on the Cytoplasmic side of the membrane; sequence VLIWKDPH. Residues 71–91 form a helical membrane-spanning segment; that stretch reads LHIPMYLFLGSLAFVDASLSS. Over 92-115 the chain is Extracellular; that stretch reads TVTPKMLINFLAKSKMISLSECMV. An intrachain disulfide couples C113 to C205. Residues 116-136 traverse the membrane as a helical segment; the sequence is QFFSLVTTVTTECFLLATMAY. At 137–155 the chain is on the cytoplasmic side; it reads DRYVAICKALLYPVIMTNE. The chain crosses the membrane as a helical span at residues 156-176; it reads LCIQLLVLSFIGGLLHALIHE. Residues 177 to 212 lie on the Extracellular side of the membrane; the sequence is AFSFRLTFCNSNIIQHFYCDIIPLLKISCTDSSINF. The chain crosses the membrane as a helical span at residues 213 to 233; sequence LMVFIFAGSVQVFTIGTILIS. Topologically, residues 234–253 are cytoplasmic; sequence YTIILFTILEKKSIKGIRKA. The helical transmembrane segment at 254-274 threads the bilayer; that stretch reads VSTCGAHLLSVSLYYGPLTFK. Residues 275 to 287 lie on the Extracellular side of the membrane; it reads YLGSASPQADDQD. The helical transmembrane segment at 288-308 threads the bilayer; the sequence is MMESLFYTVIVPLLNPMIYSL. The Cytoplasmic portion of the chain corresponds to 309–325; that stretch reads RNKQVIASFTKMFKSNV.

Belongs to the G-protein coupled receptor 1 family.

It is found in the cell membrane. Odorant receptor. The protein is Olfactory receptor 5H6 (OR5H6) of Homo sapiens (Human).